Reading from the N-terminus, the 169-residue chain is Thaumatin-like pathogenesis-related protein 2 (169 aa).

Residues 1–21 form the signal peptide; that stretch reads MATSSAVLFFLLAVFAAGASA.

Belongs to the thaumatin family.

Its function is as follows. Associated with resistance against stem rust fungi. The protein is Thaumatin-like pathogenesis-related protein 2 (RASTL-2) of Avena sativa (Oat).